The following is a 240-amino-acid chain: Keratinocyte-associated protein 3 (240 aa).

Transmembrane regions (helical) follow at residues 21–41 (VGLALILVGHVNLLVGAVLHG), 63–83 (VISVGSGLLSVSVGLVALLAS), 95–115 (LLTLALVNLLLSAACSMGLLL), and 163–183 (ALALWIPSLFMSAAEAALSGY).

Belongs to the TMEM54 family.

It is found in the membrane. The polypeptide is Keratinocyte-associated protein 3 (Krtcap3) (Mus musculus (Mouse)).